We begin with the raw amino-acid sequence, 77 residues long: Probable [Fe-S]-dependent transcriptional repressor (77 aa).

Iron-sulfur cluster-binding residues include Cys54, Cys59, Cys62, and Cys68.

The protein belongs to the FeoC family.

In terms of biological role, may function as a transcriptional regulator that controls feoABC expression. This is Probable [Fe-S]-dependent transcriptional repressor from Proteus mirabilis (strain HI4320).